The following is a 341-amino-acid chain: Trimethylamine N-oxide transport system ATP-binding protein TmoW (341 aa).

Positions 6-265 constitute an ABC transporter domain; that stretch reads IKCESVYKIF…PATEYVRKFT (260 aa). 61 to 68 provides a ligand contact to ATP; the sequence is GLSGSGKS.

It belongs to the ABC transporter superfamily. The complex is probably composed of two ATP-binding proteins (TmoW), two transmembrane proteins (TmoV) and a solute-binding protein (TmoX).

It localises to the cell inner membrane. The enzyme catalyses a quaternary ammonium(out) + ATP + H2O = a quaternary ammonium(in) + ADP + phosphate + H(+). Functionally, part of the ABC transporter complex TmoXWV involved in trimethylamine N-oxide (TMAO) import. Responsible for energy coupling to the transport system. The protein is Trimethylamine N-oxide transport system ATP-binding protein TmoW of Pelagibacter ubique (strain HTCC1062).